The chain runs to 1187 residues: Tyrosine-protein phosphatase non-receptor type 14 (1187 aa).

Positions F21–K306 constitute an FERM domain. A phosphoserine mark is found at S314, S461, and S486. Residues L510 to V524 show a composition bias toward polar residues. Residues L510–S531 form a disordered region. Residues S591, S593, S594, and S642 each carry the phosphoserine modification. Disordered regions lie at residues L671–P690 and K787–P824. Basic and acidic residues predominate over residues S815–P824. S831 carries the post-translational modification Phosphoserine. The 272-residue stretch at V909–F1180 folds into the Tyrosine-protein phosphatase domain. Substrate-binding positions include D1079, C1121 to R1127, and Q1165. Catalysis depends on C1121, which acts as the Phosphocysteine intermediate.

Belongs to the protein-tyrosine phosphatase family. Non-receptor class subfamily. As to quaternary structure, interacts with FLT4; the interaction is enhanced by stimulation with VEGFC. Interacts (via PPxY motifs) with YAP1 (via WW domains); this interaction leads to the cytoplasmic sequestration of YAP1 and inhibits its transcriptional co-activator activity. Post-translationally, ubiquitinated by the ECS (Elongin BC-CUL2/5-SOCS-box protein)/LRR1 E3 ligase complex and subsequently targeted to proteasomal degradation. Ubiquitous.

It is found in the cytoplasm. The protein localises to the cytoskeleton. Its subcellular location is the nucleus. The catalysed reaction is O-phospho-L-tyrosyl-[protein] + H2O = L-tyrosyl-[protein] + phosphate. Protein tyrosine phosphatase which may play a role in the regulation of lymphangiogenesis, cell-cell adhesion, cell-matrix adhesion, cell migration, cell growth and also regulates TGF-beta gene expression, thereby modulating epithelial-mesenchymal transition. Mediates beta-catenin dephosphorylation at adhesion junctions. Acts as a negative regulator of the oncogenic property of YAP, a downstream target of the hippo pathway, in a cell density-dependent manner. May function as a tumor suppressor. The polypeptide is Tyrosine-protein phosphatase non-receptor type 14 (PTPN14) (Homo sapiens (Human)).